We begin with the raw amino-acid sequence, 238 residues long: ATP-dependent dethiobiotin synthetase BioD (238 aa).

Residue Glu-12–Val-17 coordinates ATP. Thr-16 serves as a coordination point for Mg(2+). Residue Lys-37 is part of the active site. Position 41 (Thr-41) interacts with substrate. ATP is bound by residues Asp-50, Glu-109–Gly-112, Gly-170–Ser-171, and Pro-200–Gly-202. Mg(2+) is bound by residues Asp-50 and Glu-109.

Belongs to the dethiobiotin synthetase family. In terms of assembly, homodimer. It depends on Mg(2+) as a cofactor.

It is found in the cytoplasm. It carries out the reaction (7R,8S)-7,8-diammoniononanoate + CO2 + ATP = (4R,5S)-dethiobiotin + ADP + phosphate + 3 H(+). It functions in the pathway cofactor biosynthesis; biotin biosynthesis; biotin from 7,8-diaminononanoate: step 1/2. Its function is as follows. Catalyzes a mechanistically unusual reaction, the ATP-dependent insertion of CO2 between the N7 and N8 nitrogen atoms of 7,8-diaminopelargonic acid (DAPA, also called 7,8-diammoniononanoate) to form a ureido ring. In Streptomyces avermitilis (strain ATCC 31267 / DSM 46492 / JCM 5070 / NBRC 14893 / NCIMB 12804 / NRRL 8165 / MA-4680), this protein is ATP-dependent dethiobiotin synthetase BioD.